The chain runs to 349 residues: Achromobactin transport system permease protein CbrC (349 aa).

A run of 10 helical transmembrane segments spans residues 32–52 (LALL…KLML), 82–102 (VLAA…QAMI), 111–131 (ILGI…FLAA), 138–158 (LPLA…WLAW), 168–188 (VLTG…MLVF), 190–210 (PLTT…GASW), 216–236 (LGGW…QVRV), 263–283 (VALA…GLIA), 290–310 (LVAP…AGLV), and 325–345 (DLPA…YLLI).

Belongs to the binding-protein-dependent transport system permease family. FecCD subfamily.

The protein localises to the cell inner membrane. Its function is as follows. Part of the binding-protein-dependent transport system CbrABCD for uptake of the siderophore achromobactin. Probably responsible for the translocation of the substrate across the membrane. In Dickeya dadantii (strain 3937) (Erwinia chrysanthemi (strain 3937)), this protein is Achromobactin transport system permease protein CbrC (cbrC).